A 33-amino-acid chain; its full sequence is Brevinin 2AV (33 aa).

Cys-27 and Cys-33 form a disulfide bridge.

In terms of tissue distribution, expressed by the skin glands.

It localises to the secreted. Has antibacterial activity. This is Brevinin 2AV from Rana arvalis (Moor frog).